Here is a 737-residue protein sequence, read N- to C-terminus: Polyribonucleotide nucleotidyltransferase (737 aa).

Mg(2+)-binding residues include D489 and D495. The 60-residue stretch at 556–615 (PKIDTIKIDVDKIKIVIGKGGETIDKIIAETGVKIDIDEEGNVSIYSSDQDAINRAKEII) folds into the KH domain. The S1 motif domain occupies 625–693 (DEVYRAKVVR…EKGRIDASMK (69 aa)). A disordered region spans residues 691–737 (SMKALLPRPPKPEHDEKGEKSERPHRPRHHKDHKPKKEFTETPKDSE). Residues 700-714 (PKPEHDEKGEKSERP) show a composition bias toward basic and acidic residues. Positions 715–724 (HRPRHHKDHK) are enriched in basic residues. The span at 725 to 737 (PKKEFTETPKDSE) shows a compositional bias: basic and acidic residues.

The protein belongs to the polyribonucleotide nucleotidyltransferase family. Mg(2+) is required as a cofactor.

The protein resides in the cytoplasm. The catalysed reaction is RNA(n+1) + phosphate = RNA(n) + a ribonucleoside 5'-diphosphate. Involved in mRNA degradation. Catalyzes the phosphorolysis of single-stranded polyribonucleotides processively in the 3'- to 5'-direction. This chain is Polyribonucleotide nucleotidyltransferase, found in Streptococcus pneumoniae serotype 19F (strain G54).